The following is a 135-amino-acid chain: Small ribosomal subunit protein uS11 (135 aa).

The tract at residues 1 to 26 is disordered; the sequence is MPPKSRTAGGARKTRRKEKKNVSHGH. Positions 12–23 are enriched in basic residues; sequence RKTRRKEKKNVS.

It belongs to the universal ribosomal protein uS11 family. As to quaternary structure, part of the 30S ribosomal subunit. Interacts with proteins S7 and S18. Binds to IF-3.

Located on the platform of the 30S subunit, it bridges several disparate RNA helices of the 16S rRNA. Forms part of the Shine-Dalgarno cleft in the 70S ribosome. The polypeptide is Small ribosomal subunit protein uS11 (Beutenbergia cavernae (strain ATCC BAA-8 / DSM 12333 / CCUG 43141 / JCM 11478 / NBRC 16432 / NCIMB 13614 / HKI 0122)).